A 622-amino-acid polypeptide reads, in one-letter code: uncharacterized protein (622 aa).

The span at 157-166 (LKESPLRDQQ) shows a compositional bias: basic and acidic residues. The tract at residues 157–238 (LKESPLRDQQ…GLPDHNSISE (82 aa)) is disordered.

This is an uncharacterized protein from Homo sapiens (Human).